Here is a 194-residue protein sequence, read N- to C-terminus: Early growth response protein 1 (194 aa).

C2H2-type zinc fingers lie at residues 1–18 (CDRR…IRIH), 24–46 (FQCR…IRTH), and 52–74 (FACD…TKIH). The tract at residues 66–88 (ERKRHTKIHLRQKDKKVEKAASV) is disordered. Positions 69-79 (RHTKIHLRQKD) are enriched in basic residues.

The protein belongs to the EGR C2H2-type zinc-finger protein family.

The protein localises to the nucleus. The protein resides in the cytoplasm. Transcriptional regulator. Recognizes and binds to the DNA sequence 5'-GCG(T/G)GGGCG-3'(EGR-site) in the promoter region of target genes. Binds double-stranded target DNA, irrespective of the cytosine methylation status. Regulates the transcription of numerous target genes, and thereby plays an important role in regulating the response to growth factors, DNA damage, and ischemia. Plays a role in the regulation of cell survival, proliferation and cell death. Mediates responses to ischemia and hypoxia; regulates the expression of proteins that are involved in inflammatory processes. Plays a role in regulating the expression of circadian clock genes. In Coturnix japonica (Japanese quail), this protein is Early growth response protein 1 (EGR1).